A 479-amino-acid polypeptide reads, in one-letter code: T-box transcription factor TBX1 (479 aa).

Low complexity-rich tracts occupy residues 15 to 31 (ASSL…ADPF) and 59 to 86 (YPFA…AAAV). The tract at residues 15–86 (ASSLSGLGSP…GPGASRAAAV (72 aa)) is disordered. A DNA-binding region (T-box) is located at residues 108–286 (LWDEFNQLGT…SNPFAKGFRD (179 aa)). A disordered region spans residues 311-398 (RNPVASPTQP…APGASEPLHH (88 aa)). The segment covering 313-322 (PVASPTQPNG) has biased composition (polar residues). Residues 323–338 (SDKDAAEARREFDRDS) are compositionally biased toward basic and acidic residues. Positions 415–426 (KSRPAPYPLPGL) match the Nuclear localization signal motif.

Binds DNA as a dimer. Interacts with DSCR6. Interacts with NKX2-5. As to expression, expressed in skeletal muscle, lung and testis. Highly expressed in hair follicle stem cell, but not in terminally differentiating cells.

Its subcellular location is the nucleus. In terms of biological role, transcription factor that plays a key role in cardiovascular development by promoting pharyngeal arch segmentation during embryonic development. Also involved in craniofacial muscle development. Together with NKX2-5, acts as a regulator of asymmetric cardiac morphogenesis by promoting expression of PITX2. Acts upstream of TBX1 for the formation of the thymus and parathyroid glands from the third pharyngeal pouch. Required for hair follicle stem cell self-renewal. Binds to the palindromic T site 5'-TTCACACCTAGGTGTGAA-3' DNA sequence. This chain is T-box transcription factor TBX1, found in Mus musculus (Mouse).